A 1051-amino-acid polypeptide reads, in one-letter code: MKETPKKVLVIGSGPIKIAEAAEFDYSGSQALKALKEEGIETVLVNSNVATVQTSKKFADKLYMLPVVWWAVEKVIEKERPDGIMIGFGGQTALNVGVDLHKKGVLQKYGVKVLGTQIDGIEKALSREKFRETMIENNLPVPPSLSARSEEEAIKNAKIVGYPVMVRVSFNLGGRGSMVAWTEEDLKKNIRRALSQSYIGEVLIEKYLYHWIELEYEVMRDKKGNSAVIACIENLDPMGVHTGESTVVAPCQTLDNLEYQNMRTYTIEVARSINLIGECNVQFALNPRGYEYYIIETNPRMSRSSALASKATGYPLAYVSAKLALGYELHEVINKVSGRTCACFEPSLDYIVTKIPRWDLSKFENVDQSLATEMMSVGEVMSIGRSFEESLQKAVRMLDIGEPGVVGGKIYEAKMSKVEALKYLKERRPYWFLYVAKAFKEGATIDEVYEVTGISKFFLNKIKGLVDFYETLKILKEIDEETLKLAKKLGFSDEQISKALNKSTEYVRKIRDQSNIIPVVKLIDTLAGEWPSVTNYMYLTYNGTEDDLEFSQGNKLLMVGAGGFRIGVSVEFDWSVVSLMEAASKYFDEVAVLNYNPETVSTDWDIARKLYFDEINVERVLDLIKKEKFRYVATFSGGQIGNSIAKELEENGVRLLGTSGSSVDIAENREKFSKLLDKLGISQPNWVSATSLEEIKKFVNEVGFPVLVRPSYVLSGSSMKIAYSEEELYEYVRRATEISPKYPVVISKYIENAIEAEVDGVSDGNRVLGITLEHVEEAGVHSGDATMSIPFRKLSENSVNKMRENVLSLARELNIKGPFNVQFVVKDNTPHIIELNLRASRSMPFSSKAKGINLINESMKAIFNGLDFSEDYYEPPSKYWAVKSPQFSWSQLRGTYPFLGPEMKSTGEAASFGVTFYDALLKSWLSSIPNRIPNKNGIALVYGDKNLDYLKDTAVNLVKFGLTVYSISELPLQGIETIDKTKAEELVRAKKVEIVVTDGYLKKFDYNIRRTAVDYNIPVILNGRLGYEVSKAFLDYDSLTFFEISEYGGGI.

Residues 1-399 (MKETPKKVLV…SLQKAVRMLD (399 aa)) are carboxyphosphate synthetic domain. Arginine 127, arginine 167, glycine 173, glycine 174, lysine 206, leucine 208, glutamate 213, glycine 239, valine 240, histidine 241, glutamine 282, and glutamate 296 together coordinate ATP. Residues 131–325 (RETMIENNLP…LAYVSAKLAL (195 aa)) enclose the ATP-grasp 1 domain. Residues glutamine 282, glutamate 296, and asparagine 298 each coordinate Mg(2+). Positions 282, 296, and 298 each coordinate Mn(2+). Positions 400–548 (IGEPGVVGGK…LTYNGTEDDL (149 aa)) are oligomerization domain. Residues 549–930 (EFSQGNKLLM…LKSWLSSIPN (382 aa)) form a carbamoyl phosphate synthetic domain region. In terms of domain architecture, ATP-grasp 2 spans 673-863 (SKLLDKLGIS…LINESMKAIF (191 aa)). Positions 709, 748, 750, 755, 779, 780, 781, 782, 822, and 834 each coordinate ATP. 3 residues coordinate Mg(2+): glutamine 822, glutamate 834, and asparagine 836. Positions 822, 834, and 836 each coordinate Mn(2+). The MGS-like domain occupies 930–1051 (NRIPNKNGIA…FEISEYGGGI (122 aa)). The tract at residues 931–1051 (RIPNKNGIAL…FEISEYGGGI (121 aa)) is allosteric domain.

The protein belongs to the CarB family. In terms of assembly, composed of two chains; the small (or glutamine) chain promotes the hydrolysis of glutamine to ammonia, which is used by the large (or ammonia) chain to synthesize carbamoyl phosphate. Tetramer of heterodimers (alpha,beta)4. Mg(2+) is required as a cofactor. Mn(2+) serves as cofactor.

The enzyme catalyses hydrogencarbonate + L-glutamine + 2 ATP + H2O = carbamoyl phosphate + L-glutamate + 2 ADP + phosphate + 2 H(+). It catalyses the reaction hydrogencarbonate + NH4(+) + 2 ATP = carbamoyl phosphate + 2 ADP + phosphate + 2 H(+). It participates in amino-acid biosynthesis; L-arginine biosynthesis; carbamoyl phosphate from bicarbonate: step 1/1. It functions in the pathway pyrimidine metabolism; UMP biosynthesis via de novo pathway; (S)-dihydroorotate from bicarbonate: step 1/3. In terms of biological role, large subunit of the glutamine-dependent carbamoyl phosphate synthetase (CPSase). CPSase catalyzes the formation of carbamoyl phosphate from the ammonia moiety of glutamine, carbonate, and phosphate donated by ATP, constituting the first step of 2 biosynthetic pathways, one leading to arginine and/or urea and the other to pyrimidine nucleotides. The large subunit (synthetase) binds the substrates ammonia (free or transferred from glutamine from the small subunit), hydrogencarbonate and ATP and carries out an ATP-coupled ligase reaction, activating hydrogencarbonate by forming carboxy phosphate which reacts with ammonia to form carbamoyl phosphate. This Saccharolobus islandicus (strain M.16.4 / Kamchatka #3) (Sulfolobus islandicus) protein is Carbamoyl phosphate synthase large chain.